The chain runs to 89 residues: uncharacterized protein (89 aa).

This is an uncharacterized protein from Mycobacterium bovis (strain ATCC BAA-935 / AF2122/97).